The sequence spans 291 residues: Potassium-transporting ATPase subunit beta (291 aa).

The Cytoplasmic portion of the chain corresponds to 1–36 (MAALQEKKSCSQRMEEFRHYCWNPDTGQMLGRTLSR). Residues 37-57 (WVWISLYYVAFYVVMTGLFAL) form a helical; Signal-anchor for type II membrane protein membrane-spanning segment. At 58-291 (CIYVLMQTID…KVEFKLKIQK (234 aa)) the chain is on the extracellular side. Residues Asn99, Asn103, Asn130, Asn146, and Asn161 are each glycosylated (N-linked (GlcNAc...) asparagine). The cysteines at positions 131 and 152 are disulfide-linked. The cysteines at positions 162 and 178 are disulfide-linked. N-linked (GlcNAc...) asparagine glycans are attached at residues Asn193 and Asn222. The tract at residues 194–291 (STPPRVDCTF…KVEFKLKIQK (98 aa)) is immunoglobulin-like. A disulfide bridge links Cys201 with Cys263.

This sequence belongs to the X(+)/potassium ATPases subunit beta family. The ATPase pump is composed of two subunits: alpha (catalytic) and beta (regulatory). Interacts with alpha subunit ATP12A; this interaction is required for the formation of a functionally active pump and targeting at the plasma membrane. Interacts (via N-terminus) with alpha subunit ATP4A (via the P-domain). Post-translationally, N-glycosylation is necessary for assembly and functional expression of the pump at the plasma membrane.

Its subcellular location is the apical cell membrane. It localises to the cell membrane. In terms of biological role, the beta subunit of the gastric H(+)/K(+) ATPase pump which transports H(+) ions in exchange for K(+) ions across the apical membrane of parietal cells. Plays a structural and regulatory role in the assembly and membrane targeting of a functionally active pump. Within a transport cycle, the transfer of a H(+) ion across the membrane is coupled to ATP hydrolysis and is associated with a transient phosphorylation of the alpha subunit that shifts the pump conformation from inward-facing (E1) to outward-facing state (E2). Interacts with the phosphorylation domain of the alpha subunit and functions as a ratchet, stabilizing the lumenal-open E2 conformation and preventing the reverse reaction of the transport cycle. This Oryctolagus cuniculus (Rabbit) protein is Potassium-transporting ATPase subunit beta (ATP4B).